A 416-amino-acid chain; its full sequence is Formyl-CoA:oxalate CoA-transferase (416 aa).

Residues 17–18 (QS), Arg38, 72–75 (LNTK), 96–98 (NFH), His104, and 137–140 (KAYE) contribute to the CoA site. The active-site Nucleophile is the Asp169. 248–250 (GGQ) serves as a coordination point for substrate. 273-275 (QEQ) is a binding site for CoA.

It belongs to the CoA-transferase III family. Frc subfamily. In terms of assembly, homodimer.

The enzyme catalyses formyl-CoA + oxalate = oxalyl-CoA + formate. Its pathway is metabolic intermediate degradation; oxalate degradation; CO(2) and formate from oxalate: step 1/2. Its function is as follows. Involved in the catabolism of oxalate and in the adapatation to low pH via the induction of the oxalate-dependent acid tolerance response (ATR). Catalyzes the transfer of the CoA moiety from formyl-CoA to oxalate. The sequence is that of Formyl-CoA:oxalate CoA-transferase from Escherichia coli (strain ATCC 8739 / DSM 1576 / NBRC 3972 / NCIMB 8545 / WDCM 00012 / Crooks).